Consider the following 400-residue polypeptide: Aspartate aminotransferase (400 aa).

Positions 42 and 180 each coordinate L-aspartate. K241 is modified (N6-(pyridoxal phosphate)lysine). Residue R373 participates in L-aspartate binding.

Belongs to the class-I pyridoxal-phosphate-dependent aminotransferase family. Homodimer. The cofactor is pyridoxal 5'-phosphate.

It is found in the cytoplasm. It catalyses the reaction L-aspartate + 2-oxoglutarate = oxaloacetate + L-glutamate. This is Aspartate aminotransferase (aspC) from Sulfolobus acidocaldarius (strain ATCC 33909 / DSM 639 / JCM 8929 / NBRC 15157 / NCIMB 11770).